Here is a 154-residue protein sequence, read N- to C-terminus: Ribosomal RNA-processing protein 14-N (154 aa).

Residues 36–154 form a disordered region; that stretch reads WKQKKSTLEE…KHKASPRAGF (119 aa). A Phosphoserine modification is found at Ser80. Position 83 is a phosphothreonine (Thr83). Over residues 105-133 the composition is skewed to basic and acidic residues; sequence QDLREKRKAGDLNQKRQNKRPVENEKDSQ. Over residues 140 to 154 the composition is skewed to basic residues; that stretch reads KVQKKKHKASPRAGF.

This sequence belongs to the SURF6 family.

Its subcellular location is the nucleus. It is found in the nucleolus. In terms of biological role, involved in ribosome biogenesis and cell polarity. Required for the synthesis of both 40S and 60S ribosomal subunits and may also play some direct role in correct positioning of the mitotic spindle during mitosis. The protein is Ribosomal RNA-processing protein 14-N (rrp14n) of Schizosaccharomyces pombe (strain 972 / ATCC 24843) (Fission yeast).